A 94-amino-acid chain; its full sequence is Probable Fe(2+)-trafficking protein (94 aa).

Belongs to the Fe(2+)-trafficking protein family.

Functionally, could be a mediator in iron transactions between iron acquisition and iron-requiring processes, such as synthesis and/or repair of Fe-S clusters in biosynthetic enzymes. This chain is Probable Fe(2+)-trafficking protein, found in Marinomonas sp. (strain MWYL1).